A 150-amino-acid polypeptide reads, in one-letter code: Transcriptional repressor NrdR (150 aa).

The segment at 3 to 34 (CPFCGYEDTFVIDTREIEDQRVIRRRRECPNC) is a zinc-finger region. In terms of domain architecture, ATP-cone spans 49-139 (IMVIKKDGRR…VYQEFSSLEE (91 aa)).

Belongs to the NrdR family. Zn(2+) serves as cofactor.

Negatively regulates transcription of bacterial ribonucleotide reductase nrd genes and operons by binding to NrdR-boxes. The sequence is that of Transcriptional repressor NrdR from Dictyoglomus thermophilum (strain ATCC 35947 / DSM 3960 / H-6-12).